We begin with the raw amino-acid sequence, 217 residues long: MKFFLDTAFVEEIRAAKEWGILDGVTTNPTLVAKTGKGFMEVVQDILNIVEGPVSIEVVAQDAQGMVEQAQQLRRLGEQVVIKIPATQEGIKAVKVLSQEGIPTNVTLIFQPLQALLAAKAGATYVSPFVGRLEDIGHDAMDLVFDIKNIFDNYGFETQIIVASIRHPKHVLDAARMGADICTVPFKVMEQLFKHALTDRGLEQFLADWSKVPGRPF.

The active-site Schiff-base intermediate with substrate is Lys-83.

It belongs to the transaldolase family. Type 3B subfamily.

Its subcellular location is the cytoplasm. It catalyses the reaction D-sedoheptulose 7-phosphate + D-glyceraldehyde 3-phosphate = D-erythrose 4-phosphate + beta-D-fructose 6-phosphate. The protein operates within carbohydrate degradation; pentose phosphate pathway; D-glyceraldehyde 3-phosphate and beta-D-fructose 6-phosphate from D-ribose 5-phosphate and D-xylulose 5-phosphate (non-oxidative stage): step 2/3. Functionally, transaldolase is important for the balance of metabolites in the pentose-phosphate pathway. This chain is Probable transaldolase, found in Coprothermobacter proteolyticus (strain ATCC 35245 / DSM 5265 / OCM 4 / BT).